Consider the following 212-residue polypeptide: 2,3-bisphosphoglycerate-dependent phosphoglycerate mutase (212 aa).

Substrate is bound by residues 9–16, 22–23, Arg61, 88–91, Lys99, 115–116, and 159–160; these read RHGQSEWN, TG, ERDY, RR, and GN. Catalysis depends on His10, which acts as the Tele-phosphohistidine intermediate. The active-site Proton donor/acceptor is Glu88.

This sequence belongs to the phosphoglycerate mutase family. BPG-dependent PGAM subfamily. As to quaternary structure, homodimer.

The enzyme catalyses (2R)-2-phosphoglycerate = (2R)-3-phosphoglycerate. The protein operates within carbohydrate degradation; glycolysis; pyruvate from D-glyceraldehyde 3-phosphate: step 3/5. Functionally, catalyzes the interconversion of 2-phosphoglycerate and 3-phosphoglycerate. This Methylorubrum extorquens (strain CM4 / NCIMB 13688) (Methylobacterium extorquens) protein is 2,3-bisphosphoglycerate-dependent phosphoglycerate mutase.